We begin with the raw amino-acid sequence, 281 residues long: ATP synthase subunit a (281 aa).

The next 6 membrane-spanning stretches (helical) occupy residues 50–70 (FSFTNSSLFMLLTLSLVLLLV), 116–136 (FFPCILVTFTFLLFCNLQGMI), 145–165 (HFLITLGLSFSIFIGITIVGF), 172–192 (FLSFLLPAGVPLPLAPFLVLL), 219–239 (VKILSGFAWTMLCMNDLFYFI), and 246–266 (FIVLALTGLELGVAILQAYVF).

Belongs to the ATPase A chain family. F-type ATPases have 2 components, CF(1) - the catalytic core - and CF(0) - the membrane proton channel. CF(1) has five subunits: alpha(3), beta(3), gamma(1), delta(1), epsilon(1). CF(0) has three main subunits: a, b and c.

The protein localises to the mitochondrion inner membrane. Functionally, mitochondrial membrane ATP synthase (F(1)F(0) ATP synthase or Complex V) produces ATP from ADP in the presence of a proton gradient across the membrane which is generated by electron transport complexes of the respiratory chain. F-type ATPases consist of two structural domains, F(1) - containing the extramembraneous catalytic core and F(0) - containing the membrane proton channel, linked together by a central stalk and a peripheral stalk. During catalysis, ATP synthesis in the catalytic domain of F(1) is coupled via a rotary mechanism of the central stalk subunits to proton translocation. Key component of the proton channel; it may play a direct role in the translocation of protons across the membrane. The chain is ATP synthase subunit a (ATP6) from Oenothera berteroana (Bertero's evening primrose).